The primary structure comprises 126 residues: Small ribosomal subunit protein bS6 (126 aa).

The interval 99–126 (PLPAPRVVPGTEAPEPAQAAETPEPEAS) is disordered. Over residues 107–120 (PGTEAPEPAQAAET) the composition is skewed to low complexity.

The protein belongs to the bacterial ribosomal protein bS6 family.

Its function is as follows. Binds together with bS18 to 16S ribosomal RNA. In Synechococcus sp. (strain CC9902), this protein is Small ribosomal subunit protein bS6.